We begin with the raw amino-acid sequence, 696 residues long: Putative cyclic nucleotide-gated ion channel 13 (696 aa).

At 1–81 (MAFGRNNRVR…QGSFLQNWNK (81 aa)) the chain is on the cytoplasmic side. Residues 45–65 (KPLSFGSHNKKRDSNSSTTTQ) are disordered. A helical transmembrane segment spans residues 82–102 (IFLFASVIALAIDPLFFYIPI). Topologically, residues 103–116 (VDGERHCLNLHRNL) are extracellular. A helical transmembrane segment spans residues 117-137 (EIAASVLRTFIDAFYIIHIVF). At 138 to 170 (QFRTAYISPSSRVFGRGELVDDPKAIAIKYLSS) the chain is on the cytoplasmic side. The chain crosses the membrane as a helical span at residues 171–191 (YFIIDLLSILPLPQLVVLAVI). The Extracellular segment spans residues 192 to 204 (PNVNKPVSLITKD). Residues 205–225 (YLITVIFTQYIPRILRIYPLY) traverse the membrane as a helical segment. Residues 226-243 (TEVTRTSGIVTETAWAGA) are Cytoplasmic-facing. A helical membrane pass occupies residues 244–264 (AWNLSLYMLASHVFGALWYLI). Topologically, residues 265-367 (SVEREDRCWR…GQNLNTSKFV (103 aa)) are extracellular. A helical transmembrane segment spans residues 368–388 (GEIIFAVSICISGLVLFALLI). Over 389-696 (GNMQKYLEST…SEPDFSLRNP (308 aa)) the chain is Cytoplasmic. Residues 474-598 (LFEI…SKQL) and Glu-545 contribute to the a nucleoside 3',5'-cyclic phosphate site. The segment at 590 to 605 (FRRLHSKQLQHTFRFY) is calmodulin-binding. The 30-residue stretch at 610 to 639 (RTWGASFIQAAWRRHCRRKLARSLTEEEDR) folds into the IQ domain. The tract at residues 677–696 (NNLPLLPPKPSEPDFSLRNP) is disordered.

Belongs to the cyclic nucleotide-gated cation channel (TC 1.A.1.5) family. As to quaternary structure, homotetramer or heterotetramer.

Its subcellular location is the cell membrane. Its function is as follows. Putative cyclic nucleotide-gated ion channel. The polypeptide is Putative cyclic nucleotide-gated ion channel 13 (CNGC13) (Arabidopsis thaliana (Mouse-ear cress)).